Here is a 750-residue protein sequence, read N- to C-terminus: Ribosomal RNA large subunit methyltransferase K/L (750 aa).

A THUMP domain is found at 46 to 157; sequence TAYRLCLWSR…RGEAILSLDL (112 aa).

Belongs to the methyltransferase superfamily. RlmKL family.

It localises to the cytoplasm. It carries out the reaction guanosine(2445) in 23S rRNA + S-adenosyl-L-methionine = N(2)-methylguanosine(2445) in 23S rRNA + S-adenosyl-L-homocysteine + H(+). The enzyme catalyses guanosine(2069) in 23S rRNA + S-adenosyl-L-methionine = N(2)-methylguanosine(2069) in 23S rRNA + S-adenosyl-L-homocysteine + H(+). In terms of biological role, specifically methylates the guanine in position 2445 (m2G2445) and the guanine in position 2069 (m7G2069) of 23S rRNA. The protein is Ribosomal RNA large subunit methyltransferase K/L of Pseudomonas syringae pv. tomato (strain ATCC BAA-871 / DC3000).